Here is a 750-residue protein sequence, read N- to C-terminus: Catalase A (750 aa).

The interval 30 to 49 is disordered; it reads ERDTADAHTQQPLTTDHGVR. Residues His-93 and Asn-166 contribute to the active site. Tyr-380 contacts heme.

The protein belongs to the catalase family. Heme serves as cofactor.

The protein localises to the peroxisome matrix. The enzyme catalyses 2 H2O2 = O2 + 2 H2O. In terms of biological role, catalyzes the degradation of hydrogen peroxide (H(2)O(2)) generated by peroxisomal oxidases to water and oxygen, thereby protecting cells from the toxic effects of hydrogen peroxide. In Aspergillus fumigatus (strain ATCC MYA-4609 / CBS 101355 / FGSC A1100 / Af293) (Neosartorya fumigata), this protein is Catalase A (catA).